Reading from the N-terminus, the 166-residue chain is Putative signal peptidase complex catalytic subunit SEC11B (166 aa).

At 1 to 6 (MNKWRL) the chain is on the cytoplasmic side. A helical; Signal-anchor for type II membrane protein transmembrane segment spans residues 7-24 (YYQVLNFGMIVSSALMIW). At 25–166 (KGLMVITGSE…LGLFVLVHRE (142 aa)) the chain is on the extracellular side. Residue serine 43 is part of the active site.

It belongs to the peptidase S26B family.

It is found in the membrane. The enzyme catalyses Cleavage of hydrophobic, N-terminal signal or leader sequences from secreted and periplasmic proteins.. Putative component of some signal peptidase complex which removes signal peptides from nascent proteins as they are translocated into the lumen of the endoplasmic reticulum. This chain is Putative signal peptidase complex catalytic subunit SEC11B (SEC11B), found in Homo sapiens (Human).